A 364-amino-acid polypeptide reads, in one-letter code: Sulfate/thiosulfate import ATP-binding protein CysA (364 aa).

Positions 3-237 (IEIARIKKSF…PATRFVLEFM (235 aa)) constitute an ABC transporter domain. 35–42 (GPSGSGKT) is an ATP binding site.

It belongs to the ABC transporter superfamily. Sulfate/tungstate importer (TC 3.A.1.6) family. The complex is composed of two ATP-binding proteins (CysA), two transmembrane proteins (CysT and CysW) and a solute-binding protein (CysP).

It is found in the cell inner membrane. It catalyses the reaction sulfate(out) + ATP + H2O = sulfate(in) + ADP + phosphate + H(+). The catalysed reaction is thiosulfate(out) + ATP + H2O = thiosulfate(in) + ADP + phosphate + H(+). Functionally, part of the ABC transporter complex CysAWTP involved in sulfate/thiosulfate import. Responsible for energy coupling to the transport system. In Salmonella typhi, this protein is Sulfate/thiosulfate import ATP-binding protein CysA.